The primary structure comprises 335 residues: Galactinol synthase 2 (335 aa).

Lys103 is an active-site residue. 3 residues coordinate Mn(2+): Asp119, Asp121, and His257.

The protein belongs to the glycosyltransferase 8 family. Galactosyltransferase subfamily. Requires a divalent metal cation as cofactor. Accumulates in mature seeds.

The protein localises to the cytoplasm. The catalysed reaction is myo-inositol + UDP-alpha-D-galactose = alpha-D-galactosyl-(1-&gt;3)-1D-myo-inositol + UDP + H(+). Galactinol synthase involved in the biosynthesis of raffinose family oligosaccharides (RFOs) that function as osmoprotectants. Promotes stress tolerance of factors such as drought, chilling, salinity and methylviologen (MV), a superoxide radical generating drug, by mediating an increase in levels of the endogenous osmoprotective compounds, galactinol and raffinose. The polypeptide is Galactinol synthase 2 (GOLS2) (Arabidopsis thaliana (Mouse-ear cress)).